A 439-amino-acid polypeptide reads, in one-letter code: tRNA modification GTPase MnmE (439 aa).

(6S)-5-formyl-5,6,7,8-tetrahydrofolate contacts are provided by Arg-20, Glu-78, and Lys-116. One can recognise a TrmE-type G domain in the interval 211–364 (GIYVTILGEP…LLNLIKQKVE (154 aa)). Residues 221–226 (NSGKST), 240–246 (SEYAGTT), and 265–268 (DTAG) contribute to the GTP site. 2 residues coordinate Mg(2+): Ser-225 and Thr-246. Lys-439 contacts (6S)-5-formyl-5,6,7,8-tetrahydrofolate.

It belongs to the TRAFAC class TrmE-Era-EngA-EngB-Septin-like GTPase superfamily. TrmE GTPase family. In terms of assembly, homodimer. Heterotetramer of two MnmE and two MnmG subunits. It depends on K(+) as a cofactor.

It is found in the cytoplasm. In terms of biological role, exhibits a very high intrinsic GTPase hydrolysis rate. Involved in the addition of a carboxymethylaminomethyl (cmnm) group at the wobble position (U34) of certain tRNAs, forming tRNA-cmnm(5)s(2)U34. The chain is tRNA modification GTPase MnmE from Ehrlichia chaffeensis (strain ATCC CRL-10679 / Arkansas).